The primary structure comprises 652 residues: UvrABC system protein C (652 aa).

The GIY-YIG domain occupies 19–96 (KTSGVYLWKD…IKKHKPRYNI (78 aa)). A UVR domain is found at 203-238 (EDVSGTLKEKMKEAAEKKEFEKAARLRDGIQAVYAL).

Belongs to the UvrC family. Interacts with UvrB in an incision complex.

It localises to the cytoplasm. The UvrABC repair system catalyzes the recognition and processing of DNA lesions. UvrC both incises the 5' and 3' sides of the lesion. The N-terminal half is responsible for the 3' incision and the C-terminal half is responsible for the 5' incision. The chain is UvrABC system protein C from Treponema denticola (strain ATCC 35405 / DSM 14222 / CIP 103919 / JCM 8153 / KCTC 15104).